A 327-amino-acid chain; its full sequence is Methionine import ATP-binding protein MetN (327 aa).

In terms of domain architecture, ABC transporter spans 3–239 (VELKNIEKIY…PKHAVTKELL (237 aa)). Residue 36 to 43 (GYSGAGKS) participates in ATP binding.

Belongs to the ABC transporter superfamily. Methionine importer (TC 3.A.1.24) family. In terms of assembly, the complex is composed of two ATP-binding proteins (MetN), two transmembrane proteins (MetI) and a solute-binding protein (MetQ).

The protein localises to the cell inner membrane. The catalysed reaction is L-methionine(out) + ATP + H2O = L-methionine(in) + ADP + phosphate + H(+). It catalyses the reaction D-methionine(out) + ATP + H2O = D-methionine(in) + ADP + phosphate + H(+). Its function is as follows. Part of the ABC transporter complex MetNIQ involved in methionine import. Responsible for energy coupling to the transport system. In Helicobacter pylori (strain HPAG1), this protein is Methionine import ATP-binding protein MetN.